The sequence spans 433 residues: Serine--tRNA ligase (433 aa).

235–237 (TSE) serves as a coordination point for L-serine. 266 to 268 (RSE) serves as a coordination point for ATP. Position 289 (glutamate 289) interacts with L-serine. Residue 353 to 356 (EISS) participates in ATP binding. Serine 388 provides a ligand contact to L-serine.

The protein belongs to the class-II aminoacyl-tRNA synthetase family. Type-1 seryl-tRNA synthetase subfamily. Homodimer. The tRNA molecule binds across the dimer.

It is found in the cytoplasm. It carries out the reaction tRNA(Ser) + L-serine + ATP = L-seryl-tRNA(Ser) + AMP + diphosphate + H(+). It catalyses the reaction tRNA(Sec) + L-serine + ATP = L-seryl-tRNA(Sec) + AMP + diphosphate + H(+). The protein operates within aminoacyl-tRNA biosynthesis; selenocysteinyl-tRNA(Sec) biosynthesis; L-seryl-tRNA(Sec) from L-serine and tRNA(Sec): step 1/1. Its function is as follows. Catalyzes the attachment of serine to tRNA(Ser). Is also able to aminoacylate tRNA(Sec) with serine, to form the misacylated tRNA L-seryl-tRNA(Sec), which will be further converted into selenocysteinyl-tRNA(Sec). The polypeptide is Serine--tRNA ligase (Burkholderia ambifaria (strain MC40-6)).